Reading from the N-terminus, the 383-residue chain is Serine protease 23 (383 aa).

Residues 1 to 23 (MAGIPGLLILLLVLLCVFMQVSP) form the signal peptide. N-linked (GlcNAc...) asparagine glycosylation is present at asparagine 93. The cysteines at positions 160 and 176 are disulfide-linked. Histidine 175 (charge relay system) is an active-site residue. The N-linked (GlcNAc...) asparagine glycan is linked to asparagine 207. Residues aspartate 240 and serine 316 each act as charge relay system in the active site.

This sequence belongs to the peptidase S1 family.

It localises to the secreted. In Rattus norvegicus (Rat), this protein is Serine protease 23 (Prss23).